The following is a 1555-amino-acid chain: UDP-glucose:glycoprotein glucosyltransferase 1 (1555 aa).

The first 42 residues, 1-42 (MGCKGDASGACAAGALPVTGVCYKMGVLVVLTVLWLFSSVKA), serve as a signal peptide directing secretion. N-linked (GlcNAc...) asparagine glycans are attached at residues N536 and N1228. The interval 1244–1555 (KTEEVKQDKD…REGPQKREEL (312 aa)) is glucosyltransferase. At S1277 the chain carries Phosphoserine. The tract at residues 1534 to 1555 (GALYKEKTKEPSREGPQKREEL) is disordered. Residues 1552–1555 (REEL) carry the Prevents secretion from ER motif.

This sequence belongs to the glycosyltransferase 8 family. As to quaternary structure, monomer as well as in a tight complex with SELENOF. Interacts with METTL23. Part of a large chaperone multiprotein complex comprising DNAJB11, HSP90B1, HSPA5, HYOU, PDIA2, PDIA4, PDIA6, PPIB, SDF2L1, UGGT1 and very small amounts of ERP29, but not, or at very low levels, CALR nor CANX. The cofactor is Ca(2+). Requires Mn(2+) as cofactor. In terms of tissue distribution, higher levels in pancreas, skeletal muscle, kidney, and brain. Low levels in lung and heart.

Its subcellular location is the endoplasmic reticulum lumen. It is found in the endoplasmic reticulum-Golgi intermediate compartment. The catalysed reaction is N(4)-(alpha-D-Man-(1-&gt;2)-alpha-D-Man-(1-&gt;2)-alpha-D-Man-(1-&gt;3)-[alpha-D-Man-(1-&gt;2)-alpha-D-Man-(1-&gt;3)-[alpha-D-Man-(1-&gt;2)-alpha-D-Man-(1-&gt;6)]-alpha-D-Man-(1-&gt;6)]-beta-D-Man-(1-&gt;4)-beta-D-GlcNAc-(1-&gt;4)-beta-D-GlcNAc)-L-asparaginyl-[protein] (N-glucan mannose isomer 9A1,2,3B1,2,3) + UDP-alpha-D-glucose = N(4)-(alpha-D-Glc-(1-&gt;3)-alpha-D-Man-(1-&gt;2)-alpha-D-Man-(1-&gt;2)-alpha-D-Man-(1-&gt;3)-[alpha-D-Man-(1-&gt;2)-alpha-D-Man-(1-&gt;3)-[alpha-D-Man-(1-&gt;2)-alpha-D-Man-(1-&gt;6)]-alpha-D-Man-(1-&gt;6)]-beta-D-Man-(1-&gt;4)-beta-D-GlcNAc-(1-&gt;4)-beta-D-GlcNAc)-L-asparaginyl-[protein] + UDP + H(+). The protein operates within protein modification; protein glycosylation. Catalytic activity is enhanced by complex formation with SELENOF. Functionally, recognizes glycoproteins with minor folding defects. Reglucosylates single N-glycans near the misfolded part of the protein, thus providing quality control for protein folding in the endoplasmic reticulum. Reglucosylated proteins are recognized by calreticulin for recycling to the endoplasmic reticulum and refolding or degradation. The protein is UDP-glucose:glycoprotein glucosyltransferase 1 (UGGT1) of Homo sapiens (Human).